The primary structure comprises 397 residues: Elongation factor Tu (397 aa).

A tr-type G domain is found at 10–206 (KPHCNIGTIG…AVDEYIPQPE (197 aa)). The segment at 19–26 (GHIDHGKT) is G1. Position 19 to 26 (19 to 26 (GHIDHGKT)) interacts with GTP. Threonine 26 serves as a coordination point for Mg(2+). The interval 62–66 (GITIS) is G2. The G3 stretch occupies residues 83-86 (DCPG). GTP-binding positions include 83-87 (DCPGH) and 138-141 (NKCD). The G4 stretch occupies residues 138-141 (NKCD). A G5 region spans residues 176–178 (SAF).

This sequence belongs to the TRAFAC class translation factor GTPase superfamily. Classic translation factor GTPase family. EF-Tu/EF-1A subfamily. In terms of assembly, monomer.

The protein resides in the cytoplasm. It carries out the reaction GTP + H2O = GDP + phosphate + H(+). In terms of biological role, GTP hydrolase that promotes the GTP-dependent binding of aminoacyl-tRNA to the A-site of ribosomes during protein biosynthesis. This Cutibacterium acnes (strain DSM 16379 / KPA171202) (Propionibacterium acnes) protein is Elongation factor Tu.